Reading from the N-terminus, the 424-residue chain is Histidine--tRNA ligase (424 aa).

Belongs to the class-II aminoacyl-tRNA synthetase family. As to quaternary structure, homodimer.

It localises to the cytoplasm. It carries out the reaction tRNA(His) + L-histidine + ATP = L-histidyl-tRNA(His) + AMP + diphosphate + H(+). The protein is Histidine--tRNA ligase of Shewanella pealeana (strain ATCC 700345 / ANG-SQ1).